A 158-amino-acid polypeptide reads, in one-letter code: SsrA-binding protein (158 aa).

It belongs to the SmpB family.

It localises to the cytoplasm. Functionally, required for rescue of stalled ribosomes mediated by trans-translation. Binds to transfer-messenger RNA (tmRNA), required for stable association of tmRNA with ribosomes. tmRNA and SmpB together mimic tRNA shape, replacing the anticodon stem-loop with SmpB. tmRNA is encoded by the ssrA gene; the 2 termini fold to resemble tRNA(Ala) and it encodes a 'tag peptide', a short internal open reading frame. During trans-translation Ala-aminoacylated tmRNA acts like a tRNA, entering the A-site of stalled ribosomes, displacing the stalled mRNA. The ribosome then switches to translate the ORF on the tmRNA; the nascent peptide is terminated with the 'tag peptide' encoded by the tmRNA and targeted for degradation. The ribosome is freed to recommence translation, which seems to be the essential function of trans-translation. The sequence is that of SsrA-binding protein from Bifidobacterium longum (strain DJO10A).